Reading from the N-terminus, the 413-residue chain is Serine hydroxymethyltransferase (413 aa).

(6S)-5,6,7,8-tetrahydrofolate is bound by residues L117 and 121-123 (GHL). K226 bears the N6-(pyridoxal phosphate)lysine mark. (6S)-5,6,7,8-tetrahydrofolate is bound by residues E239 and 349 to 351 (SPF).

Belongs to the SHMT family. In terms of assembly, homodimer. It depends on pyridoxal 5'-phosphate as a cofactor.

It localises to the cytoplasm. The catalysed reaction is (6R)-5,10-methylene-5,6,7,8-tetrahydrofolate + glycine + H2O = (6S)-5,6,7,8-tetrahydrofolate + L-serine. Its pathway is one-carbon metabolism; tetrahydrofolate interconversion. The protein operates within amino-acid biosynthesis; glycine biosynthesis; glycine from L-serine: step 1/1. Catalyzes the reversible interconversion of serine and glycine with tetrahydrofolate (THF) serving as the one-carbon carrier. This reaction serves as the major source of one-carbon groups required for the biosynthesis of purines, thymidylate, methionine, and other important biomolecules. Also exhibits THF-independent aldolase activity toward beta-hydroxyamino acids, producing glycine and aldehydes, via a retro-aldol mechanism. This Bacillus cereus (strain G9842) protein is Serine hydroxymethyltransferase.